We begin with the raw amino-acid sequence, 299 residues long: Acetylglutamate kinase (299 aa).

Residues 72–73, R94, and N196 contribute to the substrate site; that span reads GG.

This sequence belongs to the acetylglutamate kinase family. ArgB subfamily.

Its subcellular location is the cytoplasm. The enzyme catalyses N-acetyl-L-glutamate + ATP = N-acetyl-L-glutamyl 5-phosphate + ADP. The protein operates within amino-acid biosynthesis; L-arginine biosynthesis; N(2)-acetyl-L-ornithine from L-glutamate: step 2/4. Functionally, catalyzes the ATP-dependent phosphorylation of N-acetyl-L-glutamate. This is Acetylglutamate kinase from Burkholderia ambifaria (strain MC40-6).